The sequence spans 81 residues: Small ribosomal subunit protein bS18 (81 aa).

Belongs to the bacterial ribosomal protein bS18 family. As to quaternary structure, part of the 30S ribosomal subunit. Forms a tight heterodimer with protein bS6.

Binds as a heterodimer with protein bS6 to the central domain of the 16S rRNA, where it helps stabilize the platform of the 30S subunit. In Chlamydia trachomatis serovar L2 (strain ATCC VR-902B / DSM 19102 / 434/Bu), this protein is Small ribosomal subunit protein bS18.